Here is a 482-residue protein sequence, read N- to C-terminus: Protein translocase subunit SecY (482 aa).

Positions 1-22 are disordered; that stretch reads MVIKKPANKVDKKSTFKSSNKK. The next 10 membrane-spanning stretches (helical) occupy residues 41–61, 92–112, 137–157, 177–197, 201–221, 243–263, 303–323, 342–362, 405–425, and 426–446; these read ILFT…TVPG, FSIL…VQLL, LTKI…IFTL, AFYY…MLWI, ITIK…IIIS, IFFS…LVIL, VIPV…SQII, FNTW…TFLY, VVGS…SKLT, and QLPS…SVAI.

This sequence belongs to the SecY/SEC61-alpha family. Component of the Sec protein translocase complex. Heterotrimer consisting of SecY, SecE and SecG subunits. The heterotrimers can form oligomers, although 1 heterotrimer is thought to be able to translocate proteins. Interacts with the ribosome. Interacts with SecDF, and other proteins may be involved. Interacts with SecA.

The protein localises to the cell membrane. Functionally, the central subunit of the protein translocation channel SecYEG. Consists of two halves formed by TMs 1-5 and 6-10. These two domains form a lateral gate at the front which open onto the bilayer between TMs 2 and 7, and are clamped together by SecE at the back. The channel is closed by both a pore ring composed of hydrophobic SecY resides and a short helix (helix 2A) on the extracellular side of the membrane which forms a plug. The plug probably moves laterally to allow the channel to open. The ring and the pore may move independently. The polypeptide is Protein translocase subunit SecY (Mycoplasma capricolum subsp. capricolum (strain California kid / ATCC 27343 / NCTC 10154)).